Here is a 37-residue protein sequence, read N- to C-terminus: Alpha-conotoxin-like Kn1.2 (37 aa).

The segment covering 1 to 15 has biased composition (basic and acidic residues); it reads ESDGAHAKARADKPA. A propeptide spanning residues 1 to 22 is cleaved from the precursor; that stretch reads ESDGAHAKARADKPARSATNRQ. A disordered region spans residues 1–23; it reads ESDGAHAKARADKPARSATNRQP. Intrachain disulfides connect C25–C31 and C26–C36. Residue C36 is modified to Cysteine amide.

It belongs to the conotoxin A superfamily. As to expression, expressed by the venom duct.

Its subcellular location is the secreted. Its function is as follows. Alpha-conotoxins act on postsynaptic membranes, they bind to the nicotinic acetylcholine receptors (nAChR) and thus inhibit them. This toxin inhibits high voltage-activated (HVA) calcium channel currents in rat DRG neurons (13% inhibition at 1 uM toxin) probably by activating GABA(B) receptors (GABBR1 and/or GABBR2). The chain is Alpha-conotoxin-like Kn1.2 from Conus kinoshitai (Kinoshita's cone).